We begin with the raw amino-acid sequence, 189 residues long: MVKLIVGLGNPGEKYIETKHNVGFMLVDKICKDLDLKFTADKIFQADIASTFLNGEKVYFVKPTTFMNESGKAVQALLAYYGLDIEDLLVIYDDLDMEVGKIRLRSKGSAGGHNGIKSIIKHIGSQEFKRIKIGIGRPKEGVTVVHHVLGKFDKDDYTTILNTLDKVDNAVNYYLQSGNFEQTMQKYNG.

Position 15 (Tyr15) interacts with tRNA. His20 functions as the Proton acceptor in the catalytic mechanism. TRNA contacts are provided by Phe66, Asn68, and Asn114.

Belongs to the PTH family. In terms of assembly, monomer.

It is found in the cytoplasm. The enzyme catalyses an N-acyl-L-alpha-aminoacyl-tRNA + H2O = an N-acyl-L-amino acid + a tRNA + H(+). In terms of biological role, hydrolyzes ribosome-free peptidyl-tRNAs (with 1 or more amino acids incorporated), which drop off the ribosome during protein synthesis, or as a result of ribosome stalling. Functionally, catalyzes the release of premature peptidyl moieties from peptidyl-tRNA molecules trapped in stalled 50S ribosomal subunits, and thus maintains levels of free tRNAs and 50S ribosomes. The sequence is that of Peptidyl-tRNA hydrolase from Streptococcus sanguinis (strain SK36).